The following is a 469-amino-acid chain: Acyltransferase clz18 (469 aa).

The next 7 helical transmembrane spans lie at G21 to D41, L70 to F90, L134 to F154, I253 to W273, G346 to L366, I391 to W411, and V424 to F444.

The protein belongs to the acyltransferase 3 family.

It is found in the membrane. The protein operates within secondary metabolite biosynthesis. Acyltransferase; part of the gene cluster that mediates the biosynthesis of squalestatin S1 (SQS1, also known as zaragozic acid A), a heavily oxidized fungal polyketide that offers potent cholesterol lowering activity by targeting squalene synthase (SS). SQS1 is composed of a 2,8-dioxobicyclic[3.2.1]octane-3,4,5-tricarboxyclic acid core that is connected to two lipophilic polyketide arms. These initial steps feature the priming of an unusual benzoic acid starter unit onto the highly reducing polyketide synthase clz14, followed by oxaloacetate extension and product release to generate a tricarboxylic acid containing product. The phenylalanine ammonia lyase (PAL) clz10 and the acyl-CoA ligase clz12 are involved in transforming phenylalanine into benzoyl-CoA. The citrate synthase-like protein clz17 is involved in connecting the C-alpha-carbons of the hexaketide chain and oxaloacetate to afford the tricarboxylic acid unit. The potential hydrolytic enzymes, clz11 and clz13, are in close proximity to pks2 and may participate in product release. On the other side, the tetraketide arm is synthesized by a the squalestatin tetraketide synthase clz2 and enzymatically esterified to the core in the last biosynthetic step, by the acetyltransferase clz6. The biosynthesis of the tetraketide must involve 3 rounds of chain extension. After the first and second rounds methyl-transfer occurs, and in all rounds of extension the ketoreductase and dehydratase are active. The enoyl reductase and C-MeT of clz2 are not active in the final round of extension. The acetyltransferase clz6 appears to have a broad substrate selectivity for its acyl CoA substrate, allowing the in vitro synthesis of novel squalestatins. The biosynthesis of SQS1 requires several oxidative steps likely performed by oxidoreductases clz3, clz15 and clz16. Finally, in support of the identification of the cluster as being responsible for SQS1 production, the cluster contains a gene encoding a putative squalene synthase (SS) clz20, suggesting a likely mechanism for self-resistance. This is Acyltransferase clz18 from Cochliobolus lunatus (Filamentous fungus).